The primary structure comprises 69 residues: Large ribosomal subunit protein bL31 (69 aa).

Positions 17, 19, 37, and 40 each coordinate Zn(2+).

The protein belongs to the bacterial ribosomal protein bL31 family. Type A subfamily. As to quaternary structure, part of the 50S ribosomal subunit. Requires Zn(2+) as cofactor.

In terms of biological role, binds the 23S rRNA. The protein is Large ribosomal subunit protein bL31 of Thermoanaerobacter pseudethanolicus (strain ATCC 33223 / 39E) (Clostridium thermohydrosulfuricum).